The following is a 518-amino-acid chain: Glucose-6-phosphate 1-dehydrogenase (518 aa).

Residues 36 to 43 (GASGDLAK), Arg70, and Lys169 contribute to the NADP(+) site. D-glucose 6-phosphate-binding positions include Lys169, 199 to 203 (HYLGK), Glu237, and Asp256. The Proton acceptor role is filled by His261. Arg356 contributes to the NADP(+) binding site. Positions 359 and 364 each coordinate D-glucose 6-phosphate. NADP(+) is bound by residues Lys365, Arg369, and Arg392. Position 394 (Gln394) interacts with D-glucose 6-phosphate. NADP(+)-binding positions include 400 to 402 (YFK), 420 to 422 (DLT), Arg486, Tyr502, and Trp508.

Belongs to the glucose-6-phosphate dehydrogenase family.

It localises to the cytoplasm. The protein localises to the cytosol. It carries out the reaction D-glucose 6-phosphate + NADP(+) = 6-phospho-D-glucono-1,5-lactone + NADPH + H(+). Its pathway is carbohydrate degradation; pentose phosphate pathway; D-ribulose 5-phosphate from D-glucose 6-phosphate (oxidative stage): step 1/3. Functionally, cytosolic glucose-6-phosphate dehydrogenase that catalyzes the first and rate-limiting step of the oxidative branch within the pentose phosphate pathway/shunt, an alternative route to glycolysis for the dissimilation of carbohydrates and a major source of reducing power and metabolic intermediates for fatty acid and nucleic acid biosynthetic processes. The protein is Glucose-6-phosphate 1-dehydrogenase (Zw) of Drosophila yakuba (Fruit fly).